The following is a 345-amino-acid chain: tRNA N6-adenosine threonylcarbamoyltransferase (345 aa).

Fe cation contacts are provided by histidine 113 and histidine 117. Substrate-binding positions include 142-146 (AISGG), aspartate 175, glycine 188, aspartate 192, and asparagine 282. Aspartate 310 contacts Fe cation.

The protein belongs to the KAE1 / TsaD family. Requires Fe(2+) as cofactor.

The protein localises to the cytoplasm. It catalyses the reaction L-threonylcarbamoyladenylate + adenosine(37) in tRNA = N(6)-L-threonylcarbamoyladenosine(37) in tRNA + AMP + H(+). Its function is as follows. Required for the formation of a threonylcarbamoyl group on adenosine at position 37 (t(6)A37) in tRNAs that read codons beginning with adenine. Is involved in the transfer of the threonylcarbamoyl moiety of threonylcarbamoyl-AMP (TC-AMP) to the N6 group of A37, together with TsaE and TsaB. TsaD likely plays a direct catalytic role in this reaction. In Bdellovibrio bacteriovorus (strain ATCC 15356 / DSM 50701 / NCIMB 9529 / HD100), this protein is tRNA N6-adenosine threonylcarbamoyltransferase.